The chain runs to 609 residues: Hemagglutinin glycoprotein (609 aa).

Topologically, residues 1-34 (MSPPRDRVDAYYKDNFQFKNTRVVLNKEQLLIER) are intravirion. Residues 35–58 (PCMLLTVLFVMFLSLVGLLAIAGI) form a helical; Signal-anchor for type II membrane protein membrane-spanning segment. The Virion surface segment spans residues 59-609 (RLHRAAVNTA…VGIKITCNGK (551 aa)). N-linked (GlcNAc...) asparagine; by host glycans are attached at residues N168, N187, N200, N215, and N395.

The protein belongs to the paramyxoviruses hemagglutinin-neuraminidase family. Non-sialidase subfamily.

It localises to the virion membrane. It is found in the host membrane. In terms of biological role, attaches the virus to cell receptors and thereby initiating infection. Binding of H protein to the receptor induces a conformational change that allows the F protein to trigger virion/cell membranes fusion. Down-regulates human MCP/CD46 cell surface expression. The polypeptide is Hemagglutinin glycoprotein (H) (Rinderpest virus (strain Kabete O) (RDV)).